The sequence spans 246 residues: MSQKGLFGILGEVVKNTGLILHRTGCKMQGDYAYVEKLNRHTRLTAFGDNAPIVGQKSFIAPNASIIGDVVIGKESSIWYNAVLRGDVNSIHIGDKTVVSDRTVVHCSSNGPLGPKPTQIGDKVYIGPGSIVHAATILGESFIGTGSTLCDGSVVEKNGFLEAGSLLTAGKTIKSGEYWGGSPAKFIRQVTKDDESQLEKIIEQNINLSEQHEKQTSKSAKELNNDLLQKYVKNRTRSDHILNNPL.

This is an uncharacterized protein from Dictyostelium discoideum (Social amoeba).